A 535-amino-acid polypeptide reads, in one-letter code: Peptide chain release factor 3 (535 aa).

A tr-type G domain is found at 8-278 (ARRRTFAIIS…VDQAPAPGPR (271 aa)). GTP contacts are provided by residues 17–24 (SHPDAGKT), 85–89 (DTPGH), and 139–142 (NKLD).

Belongs to the TRAFAC class translation factor GTPase superfamily. Classic translation factor GTPase family. PrfC subfamily.

It is found in the cytoplasm. Increases the formation of ribosomal termination complexes and stimulates activities of RF-1 and RF-2. It binds guanine nucleotides and has strong preference for UGA stop codons. It may interact directly with the ribosome. The stimulation of RF-1 and RF-2 is significantly reduced by GTP and GDP, but not by GMP. The sequence is that of Peptide chain release factor 3 from Bordetella bronchiseptica (strain ATCC BAA-588 / NCTC 13252 / RB50) (Alcaligenes bronchisepticus).